We begin with the raw amino-acid sequence, 1240 residues long: Cohesin subunit SA-3 (1240 aa).

Over residues M1–K25 the composition is skewed to low complexity. The tract at residues M1–S108 is disordered. Residues R97–S108 show a composition bias toward polar residues. Residues F324–M409 form the SCD domain. Disordered stretches follow at residues A1077–I1154 and D1213–F1240. Positions G1115 to A1125 are enriched in polar residues. Positions V1126–G1141 are enriched in basic residues. Position 1218 is a phosphoserine (S1218).

Belongs to the SCC3 family. As to quaternary structure, component of the meiosis-specific cohesin complex, which also contains the SMC1 (SMC1A or SMC1B) and SMC3 heterodimer. Such complex likely contains RAD21, or the meiosis-specific related protein REC8. Interacts with CCDC79/TERB1; recruiting cohesin to telomeres to develop structural rigidity. In terms of processing, phosphorylated. Testis specific.

It is found in the nucleus. It localises to the chromosome. Its subcellular location is the centromere. In terms of biological role, meiosis specific component of cohesin complex. The cohesin complex is required for the cohesion of sister chromatids after DNA replication. The cohesin complex apparently forms a large proteinaceous ring within which sister chromatids can be trapped. At anaphase, the complex is cleaved and dissociates from chromatin, allowing sister chromatids to segregate. The meiosis-specific cohesin complex probably replaces mitosis specific cohesin complex when it dissociates from chromatin during prophase I. This chain is Cohesin subunit SA-3 (Stag3), found in Mus musculus (Mouse).